The following is a 187-amino-acid chain: Elongation factor P (187 aa).

It belongs to the elongation factor P family.

Its subcellular location is the cytoplasm. It functions in the pathway protein biosynthesis; polypeptide chain elongation. Its function is as follows. Involved in peptide bond synthesis. Stimulates efficient translation and peptide-bond synthesis on native or reconstituted 70S ribosomes in vitro. Probably functions indirectly by altering the affinity of the ribosome for aminoacyl-tRNA, thus increasing their reactivity as acceptors for peptidyl transferase. The sequence is that of Elongation factor P from Rhizorhabdus wittichii (strain DSM 6014 / CCUG 31198 / JCM 15750 / NBRC 105917 / EY 4224 / RW1) (Sphingomonas wittichii).